Here is a 114-residue protein sequence, read N- to C-terminus: Phosphorelay protein LuxU (114 aa).

Residues 19–114 (GSDNVPVLLD…TRDAYRSWTN (96 aa)) form the HPt domain. His-58 is modified (phosphohistidine).

As to quaternary structure, monomer.

In terms of biological role, phosphorelay protein which receives sensory signals from LuxN and LuxP and transmits them to LuxO, at low cell density. LuxN and LuxP transfer a phosphoryl group to LuxU on His-58 and this phosphoryl group is further transferred to LuxO. At high cell density, as LuxU could function to establish an equilibrium between the aspartyl-phosphate of LuxN and the aspartyl-phosphate of LuxO, LuxU transfers phosphate from LuxO to LuxN (and probably LuxP) and finally phosphate is drained from the system. The sequence is that of Phosphorelay protein LuxU (luxU) from Vibrio harveyi (Beneckea harveyi).